The chain runs to 356 residues: Isocitrate dehydrogenase [NAD] subunit 1, mitochondrial (356 aa).

Substrate-binding residues include arginine 106, arginine 137, and aspartate 224. Mg(2+) is bound at residue aspartate 224.

This sequence belongs to the isocitrate and isopropylmalate dehydrogenases family. Octamer of two non-identical subunits IDH1 and IDH2. Requires Mg(2+) as cofactor. Mn(2+) serves as cofactor.

The protein resides in the mitochondrion. It carries out the reaction D-threo-isocitrate + NAD(+) = 2-oxoglutarate + CO2 + NADH. In terms of biological role, performs an essential role in the oxidative function of the citric acid cycle. Also binds RNA; specifically to the 5'-untranslated leaders of mitochondrial mRNAs. The protein is Isocitrate dehydrogenase [NAD] subunit 1, mitochondrial (idh1) of Schizosaccharomyces pombe (strain 972 / ATCC 24843) (Fission yeast).